Here is a 198-residue protein sequence, read N- to C-terminus: Endothelin-3 (198 aa).

The first 16 residues, 1–16, serve as a signal peptide directing secretion; sequence MEPGLWLLFGLTVTSA. Residues 17-86 constitute a propeptide that is removed on maturation; sequence AGLVPCPQPG…SKGGPVHGRA (70 aa). The disordered stretch occupies residues 22–79; sequence CPQPGDAGKSGVPGTPPTARSEGDIQEPVAMTAVQGPSPRSPEQEQELGRFGEQASKG. 2 cysteine pairs are disulfide-bonded: cysteine 89–cysteine 103 and cysteine 91–cysteine 99. The propeptide occupies 110-198; sequence INTPEQTVPY…RGNGGLRPTR (89 aa). The segment at 150 to 164 is endothelin-like; the sequence is CACVQSQDSACLHFC. A disordered region spans residues 174–198; the sequence is SRTATNPDKEEEPASRGNGGLRPTR.

This sequence belongs to the endothelin/sarafotoxin family. As to expression, expressed in which included heart, lung, liver, kidney, spleen, stomach, pancreas, duodenum, colon, uterus, ovary and testis.

It is found in the secreted. In terms of biological role, endothelins are endothelium-derived vasoconstrictor peptides. The polypeptide is Endothelin-3 (EDN3) (Canis lupus familiaris (Dog)).